Reading from the N-terminus, the 485-residue chain is Inosine-5'-monophosphate dehydrogenase (485 aa).

CBS domains lie at 99-154 (IVED…LVKE) and 156-215 (MTKD…VRDE). NAD(+) is bound by residues Asp247 and 294–296 (GIG). Gly296 and Gly298 together coordinate K(+). Ser299 contacts IMP. A K(+)-binding site is contributed by Cys301. Cys301 (thioimidate intermediate) is an active-site residue. Residues 334–336 (DGG), 357–358 (GN), and 381–385 (YRGMG) contribute to the IMP site. Arg397 acts as the Proton acceptor in catalysis. Residue Glu412 coordinates IMP. The K(+) site is built by Glu466, Ser467, and His468.

It belongs to the IMPDH/GMPR family. As to quaternary structure, homotetramer. Requires K(+) as cofactor.

The catalysed reaction is IMP + NAD(+) + H2O = XMP + NADH + H(+). It participates in purine metabolism; XMP biosynthesis via de novo pathway; XMP from IMP: step 1/1. With respect to regulation, mycophenolic acid (MPA) is a non-competitive inhibitor that prevents formation of the closed enzyme conformation by binding to the same site as the amobile flap. In contrast, mizoribine monophosphate (MZP) is a competitive inhibitor that induces the closed conformation. MPA is a potent inhibitor of mammalian IMPDHs but a poor inhibitor of the bacterial enzymes. MZP is a more potent inhibitor of bacterial IMPDH. Catalyzes the conversion of inosine 5'-phosphate (IMP) to xanthosine 5'-phosphate (XMP), the first committed and rate-limiting step in the de novo synthesis of guanine nucleotides, and therefore plays an important role in the regulation of cell growth. In Pyrococcus abyssi (strain GE5 / Orsay), this protein is Inosine-5'-monophosphate dehydrogenase.